The sequence spans 279 residues: Undecaprenyl-diphosphatase (279 aa).

8 consecutive transmembrane segments (helical) span residues 2 to 22 (LIIELLKAIFFGIIEGITEWL), 44 to 64 (AFIEMFNIVIQLGAIIAVMLI), 85 to 105 (WQLWLKVVIACIPSILIAVPL), 113 to 133 (FYFMVPIAIALIVYGIAFIWI), 163 to 183 (VLSIVPGTSRSGATILGAIIL), 188 to 208 (TVAADFTFFLAIPTMFGYSGL), 223 to 243 (AQVLILLVASLTAFVVSLLAI), and 255 to 275 (FTIFGKYRIVLGSLLLIYSFF).

Belongs to the UppP family.

Its subcellular location is the cell membrane. It catalyses the reaction di-trans,octa-cis-undecaprenyl diphosphate + H2O = di-trans,octa-cis-undecaprenyl phosphate + phosphate + H(+). Catalyzes the dephosphorylation of undecaprenyl diphosphate (UPP). Confers resistance to bacitracin. The protein is Undecaprenyl-diphosphatase of Streptococcus pyogenes serotype M5 (strain Manfredo).